The chain runs to 214 residues: tRNA (guanine-N(7)-)-methyltransferase (214 aa).

The S-adenosyl-L-methionine site is built by glutamate 43, glutamate 68, aspartate 95, and aspartate 117. Residue aspartate 117 is part of the active site. Residues lysine 121, aspartate 153, and 190-193 (TEYE) each bind substrate.

It belongs to the class I-like SAM-binding methyltransferase superfamily. TrmB family.

The enzyme catalyses guanosine(46) in tRNA + S-adenosyl-L-methionine = N(7)-methylguanosine(46) in tRNA + S-adenosyl-L-homocysteine. The protein operates within tRNA modification; N(7)-methylguanine-tRNA biosynthesis. Catalyzes the formation of N(7)-methylguanine at position 46 (m7G46) in tRNA. The polypeptide is tRNA (guanine-N(7)-)-methyltransferase (Staphylococcus aureus (strain USA300)).